The primary structure comprises 263 residues: Glutamate 5-kinase (263 aa).

K14 lines the ATP pocket. Residues S52, D137, and N149 each contribute to the substrate site. ATP is bound by residues 169-170 (SD) and 211-217 (TGGIVTK).

Belongs to the glutamate 5-kinase family. As to quaternary structure, homotetramer; oligomerization is not affected by L-proline feedback inhibition. It depends on Mg(2+) as a cofactor.

It carries out the reaction L-glutamate + ATP = L-glutamyl 5-phosphate + ADP. It functions in the pathway amino-acid biosynthesis; L-proline biosynthesis; L-glutamate 5-semialdehyde from L-glutamate: step 1/2. With respect to regulation, inhibited by L-proline as part of a negative feedback loop. Also inhibited by L-proline analogs 3,4-dehydro-L-proline, L-azetidine-2-carboxylic acid and L-4-thiazolidine carboxylic acid. Its function is as follows. Catalyzes the transfer of a phosphate group to glutamate to form L-glutamate 5-phosphate. May be important for growth and survival. The polypeptide is Glutamate 5-kinase (Leishmania donovani).